Consider the following 135-residue polypeptide: C-type lectin BPL (135 aa).

4 cysteine pairs are disulfide-bonded: C3–C14, C31–C131, C38–C133, and C106–C123. The 123-residue stretch at 10 to 132 (MNGLCYKIFN…CESKNAFLCQ (123 aa)) folds into the C-type lectin domain. Ca(2+)-binding residues include Q96, D98, E104, and D120. The Galactose-binding signature appears at 96 to 98 (QPD).

It belongs to the true venom lectin family. As to quaternary structure, homodimer; disulfide-linked. Expressed by the venom gland.

The protein resides in the secreted. In terms of biological role, galactose-binding protein which recognizes specific carbohydrate structures and agglutinates a variety of animal cells by binding to cell-surface glycoproteins and glycolipids. Calcium-dependent lectin. Shows high hemagglutinating activity in the presence of human erythrocytes, which are agglutinated with a minimum hemagglutination concentration (MHC) of 2.5-0.35 ug/ml. Causes indirect nephrotoxicity. Causes reductions in perfusion pressures, renal vascular resistance, urinary flow, glomerular filtration rate, sodium, potassium and chloride tubular transport. Its effects may be caused by the release of inflammatory mediators. This chain is C-type lectin BPL, found in Bothrops pirajai (Piraja's lancehead).